We begin with the raw amino-acid sequence, 785 residues long: SUN domain-containing protein 1 (785 aa).

The segment at 1-138 is LMNA-binding; sequence MDFSRLHMYS…TRRPPVLDES (138 aa). The Nuclear segment spans residues 1–288; the sequence is MDFSRLHMYS…VFLLTRCLRN (288 aa). Residues serine 48, serine 100, and serine 138 each carry the phosphoserine modification. Lysine 195 participates in a covalent cross-link: Glycyl lysine isopeptide (Lys-Gly) (interchain with G-Cter in SUMO2). The segment at 209–309 is SYNE2-binding; that stretch reads SRVYSRDRNQ…FLLLAGLSLR (101 aa). The segment at 223–309 is EMD-binding; sequence LLQILRRIGA…FLLLAGLSLR (87 aa). Residues 289-308 traverse the membrane as a helical segment; that stretch reads ICKFLVLLIPLFLLLAGLSL. Residues 309–785 lie on the Perinuclear space side of the membrane; that stretch reads RGQGNFFSFL…RFRVHGEPVK (477 aa). Aspartate 333 and serine 344 each carry phosphoserine. Positions 428–495 form a coiled coil; it reads HQEHEVRMSH…KSELSSWRHV (68 aa). Positions 574-785 are sufficient for interaction with SYNE1 and SYNE2; the sequence is TSEAVVSAVS…RFRVHGEPVK (212 aa). Positions 622 to 784 constitute an SUN domain; that stretch reads GGSILSTRCS…YRFRVHGEPV (163 aa).

As to quaternary structure, core component of the LINC complex which is composed of inner nuclear membrane SUN domain-containing proteins coupled to outer nuclear membrane KASH domain-containing nesprins. SUN and KASH domain-containing proteins seem to bind each other promiscuously; however, differentially expression of LINC complex constituents is giving rise to specific assemblies. At least SUN1/2-containing core LINC complexes are proposed to be hexameric composed of three protomers of each KASH and SUN domain-containing protein. Interacts with KASH5 (via the last 22 amino acids); this interaction mediates KASH5 telomere localization by forming a SUN1:KASH5 LINC complex. May interact with SYNE3. Interacts with SYNE2 and SYNE1; probably forming respective LINC complexes. Interacts with A-type lamin with a strong preference for unprocessed A-type lamin compared with the mature protein. Interaction with lamins B1 and C is hardly detectable. Interacts with NAT10. Interacts with EMD and TSNAX. Associates with the nuclear pore complex (NPC). Interacts with CCDC79/TERB1; promoting the accumulation of the LINC complex complexes at the telomere-nuclear envelope attachment sites. Interacts (via KASH domain) with TMEM258. Post-translationally, the disulfide bond with KASH domain-containing nesprins is required for stability of the respective LINC complexes under tensile forces.

It is found in the nucleus inner membrane. As a component of the LINC (LInker of Nucleoskeleton and Cytoskeleton) complex involved in the connection between the nuclear lamina and the cytoskeleton. The nucleocytoplasmic interactions established by the LINC complex play an important role in the transmission of mechanical forces across the nuclear envelope and in nuclear movement and positioning. Required for interkinetic nuclear migration (INM) and essential for nucleokinesis and centrosome-nucleus coupling during radial neuronal migration in the cerebral cortex and during glial migration. Involved in telomere attachment to nuclear envelope in the prophase of meiosis implicating a SUN1/2:KASH5 LINC complex in which SUN1 and SUN2 seem to act at least partial redundantly. Required for gametogenesis and involved in selective gene expression of coding and non-coding RNAs needed for gametogenesis. Helps to define the distribution of nuclear pore complexes (NPCs). Required for efficient localization of SYNE4 in the nuclear envelope. May be involved in nuclear remodeling during sperm head formation in spermatogenesis. May play a role in DNA repair by suppressing non-homologous end joining repair to facilitate the repair of DNA cross-links. This chain is SUN domain-containing protein 1, found in Homo sapiens (Human).